Here is a 662-residue protein sequence, read N- to C-terminus: Methyl-accepting chemotaxis protein TlpB (662 aa).

Residues 1–16 lie on the Cytoplasmic side of the membrane; it reads MGKFIQWIKQPSISKP. The helical transmembrane segment at 17 to 37 threads the bilayer; it reads LIAAFLAVLILPVGVLAYFSY. Topologically, residues 38 to 281 are extracellular; the sequence is QSAWNALDRE…LQDASSPVLN (244 aa). A Cache domain is found at 153 to 228; it reads SEPYTDEATG…KPGTTGSGDW (76 aa). A helical transmembrane segment spans residues 282–302; the sequence is TAVIILCVSIVIGGILILYII. Residues 303–355 enclose the HAMP domain; the sequence is RAITKPLRKLVSTSAKISSGDLTEVIDIHSKNEFGQLGESFNEMSASLRSVIG. Topologically, residues 303-662 are cytoplasmic; sequence RAITKPLRKL…DITKKFKIES (360 aa). Residue glutamate 370 is modified to Glutamate methyl ester (Glu). A Methyl-accepting transducer domain is found at 374 to 610; sequence SAAQTSKATE…EVSSAVEDIS (237 aa). Position 594 is a glutamate methyl ester (Gln) (glutamine 594). A glutamate methyl ester (Glu) mark is found at glutamate 629 and glutamate 636.

Belongs to the methyl-accepting chemotaxis (MCP) protein family.

It localises to the cell membrane. In terms of biological role, chemotactic-signal transducers respond to changes in the concentration of attractants and repellents in the environment, transduce a signal from the outside to the inside of the cell, and facilitate sensory adaptation through the variation of the level of methylation. All amino acids serve as attractants in B.subtilis, they appear to cause an increase in the turnover methyl groups, leading to methylation of an unidentified acceptor, while repellents have been shown to cause a decrease in methyl group turnover. The methyl groups are added by a methyltransferase and removed by a methylesterase. This Bacillus subtilis (strain 168) protein is Methyl-accepting chemotaxis protein TlpB (tlpB).